The sequence spans 72 residues: DNA-directed RNA polymerase subunit Rpo10 (72 aa).

Zn(2+)-binding residues include C7, C10, C53, and C54.

The protein belongs to the archaeal Rpo10/eukaryotic RPB10 RNA polymerase subunit family. Part of the RNA polymerase complex. It depends on Zn(2+) as a cofactor.

It localises to the cytoplasm. It carries out the reaction RNA(n) + a ribonucleoside 5'-triphosphate = RNA(n+1) + diphosphate. DNA-dependent RNA polymerase (RNAP) catalyzes the transcription of DNA into RNA using the four ribonucleoside triphosphates as substrates. In Thermoplasma acidophilum (strain ATCC 25905 / DSM 1728 / JCM 9062 / NBRC 15155 / AMRC-C165), this protein is DNA-directed RNA polymerase subunit Rpo10.